The sequence spans 285 residues: 2-dehydro-3-deoxyphosphooctonate aldolase (285 aa).

Belongs to the KdsA family.

Its subcellular location is the cytoplasm. The enzyme catalyses D-arabinose 5-phosphate + phosphoenolpyruvate + H2O = 3-deoxy-alpha-D-manno-2-octulosonate-8-phosphate + phosphate. It participates in carbohydrate biosynthesis; 3-deoxy-D-manno-octulosonate biosynthesis; 3-deoxy-D-manno-octulosonate from D-ribulose 5-phosphate: step 2/3. It functions in the pathway bacterial outer membrane biogenesis; lipopolysaccharide biosynthesis. This Delftia acidovorans (strain DSM 14801 / SPH-1) protein is 2-dehydro-3-deoxyphosphooctonate aldolase.